Consider the following 190-residue polypeptide: Putative acetyltransferase DDB_G0275913 (190 aa).

It belongs to the transferase hexapeptide repeat family.

The sequence is that of Putative acetyltransferase DDB_G0275913 from Dictyostelium discoideum (Social amoeba).